The following is a 41-amino-acid chain: Competence-stimulating peptide type 1 (41 aa).

Residues 1–24 (MKNTVKLEQFVALKEKDLQKIKGG) constitute a propeptide that is removed on maturation.

The protein belongs to the ComC family.

It is found in the secreted. Its function is as follows. Acts as a pheromone, induces cells to develop competence for genetic transformation. The protein is Competence-stimulating peptide type 1 (comC1) of Streptococcus pneumoniae.